The following is a 642-amino-acid chain: Threonine--tRNA ligase (642 aa).

A TGS domain is found at 1–61 (MPVITITNGL…MQDSKLDIIT (61 aa)). The segment at 243–534 (DHRKIGQQLD…LIEEYAGFFP (292 aa)) is catalytic. Zn(2+)-binding residues include Cys334, His385, and His511.

It belongs to the class-II aminoacyl-tRNA synthetase family. As to quaternary structure, homodimer. The cofactor is Zn(2+).

The protein resides in the cytoplasm. The catalysed reaction is tRNA(Thr) + L-threonine + ATP = L-threonyl-tRNA(Thr) + AMP + diphosphate + H(+). In terms of biological role, catalyzes the attachment of threonine to tRNA(Thr) in a two-step reaction: L-threonine is first activated by ATP to form Thr-AMP and then transferred to the acceptor end of tRNA(Thr). Also edits incorrectly charged L-seryl-tRNA(Thr). The polypeptide is Threonine--tRNA ligase (Baumannia cicadellinicola subsp. Homalodisca coagulata).